The following is a 430-amino-acid chain: Adenylosuccinate synthetase (430 aa).

GTP-binding positions include 12-18 (GDEGKGK) and 40-42 (GHT). Asp13 serves as the catalytic Proton acceptor. 2 residues coordinate Mg(2+): Asp13 and Gly40. Residues 13–16 (DEGK), 38–41 (NAGH), Thr129, Arg143, Gln224, Thr239, and Arg303 each bind IMP. His41 serves as the catalytic Proton donor. Position 299 to 305 (299 to 305 (TVSNRER)) interacts with substrate. Residues Arg305, 331–333 (KLD), and 413–415 (STG) each bind GTP.

This sequence belongs to the adenylosuccinate synthetase family. As to quaternary structure, homodimer. Mg(2+) is required as a cofactor.

The protein resides in the cytoplasm. It carries out the reaction IMP + L-aspartate + GTP = N(6)-(1,2-dicarboxyethyl)-AMP + GDP + phosphate + 2 H(+). It participates in purine metabolism; AMP biosynthesis via de novo pathway; AMP from IMP: step 1/2. Its function is as follows. Plays an important role in the de novo pathway of purine nucleotide biosynthesis. Catalyzes the first committed step in the biosynthesis of AMP from IMP. The protein is Adenylosuccinate synthetase of Ehrlichia ruminantium (strain Welgevonden).